A 253-amino-acid polypeptide reads, in one-letter code: MNFSGGGRQEAAGSRGRRAPRPREQDRDVQLSKALSYALRHGALKLGLPMGADGFVPLGTLLQLPQFRGFSAEDVQRVVDTNRKQRFALQLGDPSTGLLIRANQGHSLQVPKLELMPLETPQALPPMLVHGTFWKHWPSILLKGLSCQGRTHIHLAPGLPGDPGIISGMRSHCEIAVFIDGPLALADGIPFFRSANGVILTPGNTDGFLLPKYFKEALQLRPTRKPLSLAGDEETECQSSPKHSSRERRRIQQ.

Met1 is subject to N-acetylmethionine. Disordered regions lie at residues 1-29 (MNFS…DRDV) and 225-253 (KPLS…RIQQ). Ser240 carries the phosphoserine modification. Positions 243–253 (HSSRERRRIQQ) are enriched in basic residues.

This sequence belongs to the KptA/TPT1 family. As to expression, widely expressed. Weakly or not expressed in lung, spleen, small intestine and peripheral blood leukocytes.

The catalysed reaction is 2'-phospho-[ligated tRNA] + NAD(+) = mature tRNA + ADP-alpha-D-ribose 1'',2''-cyclic phosphate + nicotinamide. In terms of biological role, catalyzes the last step of tRNA splicing, the transfer of the splice junction 2'-phosphate from ligated tRNA to NAD to produce ADP-ribose 1''-2'' cyclic phosphate. In Homo sapiens (Human), this protein is tRNA 2'-phosphotransferase 1 (TRPT1).